We begin with the raw amino-acid sequence, 373 residues long: UDP-glucose 4-epimerase 3 (373 aa).

Residue 27 to 58 (SVLVTGGAGYIGTHTVLRLLEKGFAVTVVDNF) participates in NAD(+) binding. Serine 153 serves as a coordination point for substrate. Tyrosine 177 (proton acceptor) is an active-site residue.

The protein belongs to the NAD(P)-dependent epimerase/dehydratase family. NAD(+) is required as a cofactor.

The enzyme catalyses UDP-alpha-D-glucose = UDP-alpha-D-galactose. It participates in carbohydrate metabolism; galactose metabolism. Catalyzes the interconversion between UDP-glucose and UDP-galactose. This Oryza sativa subsp. japonica (Rice) protein is UDP-glucose 4-epimerase 3 (UGE-3).